A 734-amino-acid chain; its full sequence is Photosystem I P700 chlorophyll a apoprotein A2 (734 aa).

8 helical membrane passes run 46-69, 135-158, 175-199, 273-291, 330-353, 369-395, 417-439, and 517-535; these read IFASHFGQLAIIFLWTSGNLFHVA, LYTGALFLLFLSALSLIGGWLHLQ, LNHHLSGLFGVSSLAWTGHLVHVAI, MAHHHLAIAILFLIAGHMY, IHFQLGLALASLGVITSLVAQHMY, AALYTHHQYIAGFIMTGAFAHGAIFFI, AIISHLSWASLFLGFHTLGLYVH, and FLVHHAIALGLHTTTLILV. [4Fe-4S] cluster is bound by residues cysteine 559 and cysteine 568. 2 helical membrane-spanning segments follow: residues 575–596 and 643–665; these read AFYLAVFWMLNTIGWVTFYWHW and LSVWAWMFLFGHLVWATGFMFLI. Chlorophyll a-binding residues include histidine 654, methionine 662, and tyrosine 670. Position 671 (tryptophan 671) interacts with phylloquinone. A helical membrane pass occupies residues 707–727; sequence LVGLAHFSVGYIFTYAAFLIA.

It belongs to the PsaA/PsaB family. As to quaternary structure, the PsaA/B heterodimer binds the P700 chlorophyll special pair and subsequent electron acceptors. PSI consists of a core antenna complex that captures photons, and an electron transfer chain that converts photonic excitation into a charge separation. The eukaryotic PSI reaction center is composed of at least 11 subunits. Requires P700 is a chlorophyll a/chlorophyll a' dimer, A0 is one or more chlorophyll a, A1 is one or both phylloquinones and FX is a shared 4Fe-4S iron-sulfur center. as cofactor.

Its subcellular location is the plastid. The protein resides in the chloroplast thylakoid membrane. The catalysed reaction is reduced [plastocyanin] + hnu + oxidized [2Fe-2S]-[ferredoxin] = oxidized [plastocyanin] + reduced [2Fe-2S]-[ferredoxin]. In terms of biological role, psaA and PsaB bind P700, the primary electron donor of photosystem I (PSI), as well as the electron acceptors A0, A1 and FX. PSI is a plastocyanin-ferredoxin oxidoreductase, converting photonic excitation into a charge separation, which transfers an electron from the donor P700 chlorophyll pair to the spectroscopically characterized acceptors A0, A1, FX, FA and FB in turn. Oxidized P700 is reduced on the lumenal side of the thylakoid membrane by plastocyanin. The chain is Photosystem I P700 chlorophyll a apoprotein A2 from Arabis hirsuta (Hairy rock-cress).